A 289-amino-acid polypeptide reads, in one-letter code: Glucose and ribitol dehydrogenase homolog 2 (289 aa).

A disordered region spans residues M1–K32. L43–A67 provides a ligand contact to NAD(+). A substrate-binding site is contributed by S180. The active-site Proton acceptor is the Y193.

It belongs to the short-chain dehydrogenases/reductases (SDR) family.

Functionally, may act as a short alcohol-polyol-sugar dehydrogenase possibly related to carbohydrate metabolism and the acquisition of desiccation tolerance. May also be involved in signal transduction. This is Glucose and ribitol dehydrogenase homolog 2 from Arabidopsis thaliana (Mouse-ear cress).